The following is a 324-amino-acid chain: Biotin synthase 1 (324 aa).

The Radical SAM core domain maps to 37–256; it reads NAIETASLLS…VALARILMPA (220 aa). The [4Fe-4S] cluster site is built by Cys52, Cys56, and Cys59. Residues Cys96, Cys127, Cys187, and Arg260 each contribute to the [2Fe-2S] cluster site.

It belongs to the radical SAM superfamily. Biotin synthase family. Homodimer. Requires [4Fe-4S] cluster as cofactor. The cofactor is [2Fe-2S] cluster.

The catalysed reaction is (4R,5S)-dethiobiotin + (sulfur carrier)-SH + 2 reduced [2Fe-2S]-[ferredoxin] + 2 S-adenosyl-L-methionine = (sulfur carrier)-H + biotin + 2 5'-deoxyadenosine + 2 L-methionine + 2 oxidized [2Fe-2S]-[ferredoxin]. The protein operates within cofactor biosynthesis; biotin biosynthesis; biotin from 7,8-diaminononanoate: step 2/2. In terms of biological role, catalyzes the conversion of dethiobiotin (DTB) to biotin by the insertion of a sulfur atom into dethiobiotin via a radical-based mechanism. This chain is Biotin synthase 1, found in Paracoccus denitrificans (strain Pd 1222).